Reading from the N-terminus, the 332-residue chain is Ribosomal RNA small subunit methyltransferase H (332 aa).

Residues 39 to 41 (GGY), D56, F83, D100, and Q107 contribute to the S-adenosyl-L-methionine site.

This sequence belongs to the methyltransferase superfamily. RsmH family.

The protein localises to the cytoplasm. It carries out the reaction cytidine(1402) in 16S rRNA + S-adenosyl-L-methionine = N(4)-methylcytidine(1402) in 16S rRNA + S-adenosyl-L-homocysteine + H(+). Specifically methylates the N4 position of cytidine in position 1402 (C1402) of 16S rRNA. The sequence is that of Ribosomal RNA small subunit methyltransferase H from Bartonella tribocorum (strain CIP 105476 / IBS 506).